A 440-amino-acid chain; its full sequence is Serine/threonine-protein kinase STK11 (440 aa).

A Protein kinase domain is found at 49–309 (YLMGDLLGEG…IQQIRQHNWF (261 aa)). ATP-binding positions include 55–63 (LGEGSYGKV) and Lys78. Asp176 (proton acceptor) is an active-site residue. A phosphothreonine; by autocatalysis mark is found at Thr336 and Thr365. Positions 370-440 (VPGQVPEEEA…IRKLSTCKQQ (71 aa)) are disordered. Over residues 430–440 (KIRKLSTCKQQ) the composition is skewed to basic residues. Ser435 is subject to Phosphoserine; by PKA.

It belongs to the protein kinase superfamily. CAMK Ser/Thr protein kinase family. LKB1 subfamily. Catalytic component of a trimeric complex composed of STK11/LKB1, STRAD (STRADA or STRADB) and CAB39/MO25 (CAB39/MO25alpha or CAB39L/MO25beta). Mg(2+) is required as a cofactor. Requires Mn(2+) as cofactor. In terms of tissue distribution, ubiquitously expressed in all tissues tested. High levels were observed in duodenum and skeletal muscle, lower levels in liver and pancreas.

The protein resides in the nucleus. It is found in the cytoplasm. It carries out the reaction L-seryl-[protein] + ATP = O-phospho-L-seryl-[protein] + ADP + H(+). It catalyses the reaction L-threonyl-[protein] + ATP = O-phospho-L-threonyl-[protein] + ADP + H(+). Tumor suppressor serine/threonine-protein kinase that controls the activity of AMP-activated protein kinase (AMPK) family members, thereby playing a role in various processes such as cell metabolism, cell polarity, apoptosis and DNA damage response. Acts by phosphorylating the T-loop of AMPK family proteins, leading to promote their activity. This chain is Serine/threonine-protein kinase STK11, found in Gallus gallus (Chicken).